Reading from the N-terminus, the 64-residue chain is Large ribosomal subunit protein bL35 (64 aa).

Disordered stretches follow at residues 1 to 22 (MPKA…TGKI) and 34 to 64 (EHKP…LLNG). Residues 34–46 (EHKPTTRTRRLEG) are compositionally biased toward basic and acidic residues. Residues 50 to 64 (VSANDTKRVNSLLNG) show a composition bias toward polar residues.

This sequence belongs to the bacterial ribosomal protein bL35 family.

The protein is Large ribosomal subunit protein bL35 of Mycolicibacterium paratuberculosis (strain ATCC BAA-968 / K-10) (Mycobacterium paratuberculosis).